A 310-amino-acid chain; its full sequence is Thioesterase pytI (310 aa).

Helical transmembrane passes span 14–34 (SLTPLILIHAISGLALPYFAL) and 95–115 (LLGGWSMGGMLAIEMAAIFVA). Residues 168–195 (TLSDDASTTTSSDNSRASTDHGADSEVE) are disordered. The segment covering 170–184 (SDDASTTTSSDNSRA) has biased composition (low complexity).

The protein belongs to the AMT4 thioesterase family.

It is found in the membrane. It participates in secondary metabolite biosynthesis. Its function is as follows. Thioesterase; part of the gene cluster that mediates the biosynthesis of pyranterreones, a family of antioxidative compounds. The first step of pyranonigrins biosynthesis is performed by the hybrid PKS-NRPS synthetase pytA that condenses 4 malonyl-CoA units ato the acetyl starter unit by the modular PKS of pytA. The acyl chain is then connected to an L-serine through the amide bond by the modular NRPS of pytA. A tetramic acid is formed and released from the PKS-NRPS pytA to give pyranterreone 5 with the help of the thioesterase pytI. Pyranterreone 5 could be methylated by pytC to afford pyranterreone 6. Both pyranterreones 5 and 6 are subsequently oxidized by the FAD-linked oxidoreductase pytB and the cytochrome P450 monooxygenase pytD to form the fused gamma-pyrone core, resulting in pyranterreones 7 and 11, respectively. The hydroxy group at C-8 of pyranterreones 7 and 11 are dehydrated by the aspartyl protease pytH to form a delta-7 double bond to give pyranterreones 3 and 1, 2 accordingly. The exo-methylene of pyranterreone 3 could be reduced into a pendant methyl by reductase pytE to provide pyranterreone 4, also known as cordylactam. Pyranterreone 4 can be reconverted to pyranterreone 3 through pytB-catalyzed dehydrogenation or further oxidized to pyranterreones 9 and 10. This chain is Thioesterase pytI, found in Aspergillus terreus.